A 348-amino-acid polypeptide reads, in one-letter code: Rhodopsin (348 aa).

Methionine 1 carries the post-translational modification N-acetylmethionine. The Extracellular segment spans residues 1 to 36; sequence MNGTEGPNFYVPFSNVTGVVRSPFEQPQYYLAEPWQ. N-linked (GlcNAc...) asparagine glycans are attached at residues asparagine 2 and asparagine 15. A helical transmembrane segment spans residues 37–61; it reads FSMLAAYMFLLIVLGFPINFLTLYV. At 62-73 the chain is on the cytoplasmic side; that stretch reads TVQHKKLRTPLN. The helical transmembrane segment at 74-96 threads the bilayer; sequence YILLNLAVADLFMVFGGFTTTLY. Over 97 to 110 the chain is Extracellular; sequence TSLHGYFVFGPTGC. A disulfide bridge connects residues cysteine 110 and cysteine 187. A helical membrane pass occupies residues 111-133; the sequence is NLEGFFATLGGEIALWSLVVLAI. Residues 134–136 carry the 'Ionic lock' involved in activated form stabilization motif; the sequence is ERY. Over 134–152 the chain is Cytoplasmic; the sequence is ERYVVVCKPMSNFRFGENH. Residues 153 to 173 form a helical membrane-spanning segment; that stretch reads AIMGVVFTWIMALACAAPPLV. Residues 174–202 are Extracellular-facing; sequence GWSRYIPEGMQCSCGIDYYTLKPEVNNES. Residue glutamate 201 coordinates Zn(2+). Residues 203 to 224 form a helical membrane-spanning segment; it reads FVIYMFVVHFTIPMIVIFFCYG. The Cytoplasmic portion of the chain corresponds to 225 to 252; the sequence is QLVFTVKEAAAQQQESATTQKAEKEVTR. A helical membrane pass occupies residues 253-274; sequence MVIIMVIFFLICWLPYASVAFY. Over 275–286 the chain is Extracellular; sequence IFTHQGSNFGPI. Glutamine 279 is a binding site for Zn(2+). The chain crosses the membrane as a helical span at residues 287-308; that stretch reads FMTLPAFFAKSSSIYNPVIYIM. An N6-(retinylidene)lysine modification is found at lysine 296. Topologically, residues 309 to 348 are cytoplasmic; it reads LNKQFRNCMLTTLCCGKNPLGDDDASATASKTETSQVAPA. Residues cysteine 322 and cysteine 323 are each lipidated (S-palmitoyl cysteine). The segment at 330–348 is interaction with SAG; that stretch reads DDDASATASKTETSQVAPA. Position 334 is a phosphoserine (serine 334). Threonine 336 is subject to Phosphothreonine. Serine 338 carries the phosphoserine modification. A phosphothreonine mark is found at threonine 340 and threonine 342. Serine 343 is subject to Phosphoserine.

This sequence belongs to the G-protein coupled receptor 1 family. Opsin subfamily. Homodimer. May form a complex composed of RHO, GRK1 and RCVRN in a Ca(2+)-dependent manner; RCVRN prevents the interaction between GRK1 and RHO. Interacts with GRK1. Interacts (phosphorylated form) with SAG. Interacts with GNAT1. Interacts with GNAT3. SAG and G-proteins compete for a common binding site. Interacts with PRCD; the interaction promotes PRCD stability. Forms a complex with ASAP1 and ARF4. Forms a complex with ASAP1, RAB11A, Rabin8/RAB3IP, ARF4 and RAB11FIP3; the complex regulates Golgi-to-cilia rhodopsin/RHO transport in photoreceptors. In terms of processing, phosphorylated on some or all of the serine and threonine residues present in the C-terminal region. Post-translationally, contains one covalently linked retinal chromophore. Upon light absorption, the covalently bound 11-cis-retinal is converted to all-trans-retinal. After hydrolysis of the Schiff base and release of the covalently bound all-trans-retinal, active rhodopsin is regenerated by binding of a fresh molecule of 11-cis-retinal. As to expression, rod-shaped photoreceptor cells in the retina (at protein level).

Its subcellular location is the membrane. The protein localises to the cell projection. It is found in the cilium. The protein resides in the photoreceptor outer segment. Photoreceptor required for image-forming vision at low light intensity. Required for photoreceptor cell viability after birth. Light-induced isomerization of 11-cis to all-trans retinal triggers a conformational change that activates signaling via G-proteins. Subsequent receptor phosphorylation mediates displacement of the bound G-protein alpha subunit by the arrestin SAG and terminates signaling. The protein is Rhodopsin (Rho) of Mus musculus (Mouse).